The following is a 455-amino-acid chain: UDP-N-acetylmuramoylalanine--D-glutamate ligase (455 aa).

117-123 provides a ligand contact to ATP; it reads GSAGKTT.

Belongs to the MurCDEF family.

The protein localises to the cytoplasm. The catalysed reaction is UDP-N-acetyl-alpha-D-muramoyl-L-alanine + D-glutamate + ATP = UDP-N-acetyl-alpha-D-muramoyl-L-alanyl-D-glutamate + ADP + phosphate + H(+). It functions in the pathway cell wall biogenesis; peptidoglycan biosynthesis. Functionally, cell wall formation. Catalyzes the addition of glutamate to the nucleotide precursor UDP-N-acetylmuramoyl-L-alanine (UMA). The polypeptide is UDP-N-acetylmuramoylalanine--D-glutamate ligase (Symbiobacterium thermophilum (strain DSM 24528 / JCM 14929 / IAM 14863 / T)).